A 1026-amino-acid chain; its full sequence is UPF0182 protein FRAAL6027 (1026 aa).

7 helical membrane-spanning segments follow: residues 13-33 (AKVIVPVLLAVALVIAFVAIF), 60-80 (ILLFLIFGAVMAVVIGTNIVL), 108-128 (YMKLVLVAVAAVFGLAAGLSA), 167-187 (FLLGFLLTAVLLSLLVTVLTH), 208-228 (AHISVLLGLLALLKAWAYYLD), 250-270 (AVLPAKLILLFISLACAVLFI), and 283-303 (LGAGILVLSSVVIGGIYPAFI). A compositionally biased stretch (low complexity) spans 877–888 (AAAGAGTGATTT). Disordered stretches follow at residues 877–916 (AAAGAGTGATTTTGGGGQATTQGGGTGAAPPGGTSGLQDA) and 958–1026 (LASP…PPPG). The segment covering 889 to 903 (TGGGGQATTQGGGTG) has biased composition (gly residues). The span at 970–1001 (PTPSRSAAPTTRGTAAGSAPPGTTPAVAAPAG) shows a compositional bias: low complexity. The span at 1016–1026 (PQQPRAAPPPG) shows a compositional bias: pro residues.

It belongs to the UPF0182 family.

Its subcellular location is the cell membrane. The protein is UPF0182 protein FRAAL6027 of Frankia alni (strain DSM 45986 / CECT 9034 / ACN14a).